We begin with the raw amino-acid sequence, 424 residues long: Serine--tRNA ligase (424 aa).

229 to 231 (TAE) contributes to the L-serine binding site. 260 to 262 (RRE) is a binding site for ATP. Glu-283 is a binding site for L-serine. An ATP-binding site is contributed by 347–350 (EVSS). L-serine is bound at residue Ser-383.

The protein belongs to the class-II aminoacyl-tRNA synthetase family. Type-1 seryl-tRNA synthetase subfamily. In terms of assembly, homodimer. The tRNA molecule binds across the dimer.

The protein resides in the cytoplasm. The catalysed reaction is tRNA(Ser) + L-serine + ATP = L-seryl-tRNA(Ser) + AMP + diphosphate + H(+). It carries out the reaction tRNA(Sec) + L-serine + ATP = L-seryl-tRNA(Sec) + AMP + diphosphate + H(+). The protein operates within aminoacyl-tRNA biosynthesis; selenocysteinyl-tRNA(Sec) biosynthesis; L-seryl-tRNA(Sec) from L-serine and tRNA(Sec): step 1/1. Catalyzes the attachment of serine to tRNA(Ser). Is also able to aminoacylate tRNA(Sec) with serine, to form the misacylated tRNA L-seryl-tRNA(Sec), which will be further converted into selenocysteinyl-tRNA(Sec). This is Serine--tRNA ligase from Roseiflexus castenholzii (strain DSM 13941 / HLO8).